A 345-amino-acid polypeptide reads, in one-letter code: Molybdate/tungstate-binding protein WtpA (345 aa).

An N-terminal signal peptide occupies residues 1–27; sequence MREGGVMKKRLLALIVAFAVLTAGCLG. Molybdate is bound by residues 41 to 42, serine 75, 160 to 162, glutamate 218, and tyrosine 236; these read GS and DPC. Residues 41–42, serine 75, 160–162, glutamate 218, and tyrosine 236 contribute to the tungstate site; these read GS and DPC.

It belongs to the bacterial solute-binding protein 1 family. WtpA subfamily. In terms of assembly, monomer. The complex is composed of two ATP-binding proteins (WtpC), two transmembrane proteins (WtpB) and a solute-binding protein (WtpA).

It localises to the cell membrane. Part of the ABC transporter complex WtpABC involved in molybdate/tungstate import. Binds tungstate and molybdate, with a preference for tungstate. This is Molybdate/tungstate-binding protein WtpA from Pyrococcus furiosus (strain ATCC 43587 / DSM 3638 / JCM 8422 / Vc1).